The following is a 688-amino-acid chain: Polyribonucleotide nucleotidyltransferase (688 aa).

Mg(2+)-binding residues include Asp484 and Asp490. One can recognise a KH domain in the interval 550–609 (PTTEIFNVAPDKIVEIIGQGGRVIKEIVEKFEVKIDLNKPSGEVKIMGNKERVLKTKEFI). Residues 626 to 688 (DEVLEAQVKR…NKGKIALDLA (63 aa)) enclose the S1 motif domain.

This sequence belongs to the polyribonucleotide nucleotidyltransferase family. Mg(2+) is required as a cofactor.

The protein localises to the cytoplasm. It carries out the reaction RNA(n+1) + phosphate = RNA(n) + a ribonucleoside 5'-diphosphate. In terms of biological role, involved in mRNA degradation. Catalyzes the phosphorolysis of single-stranded polyribonucleotides processively in the 3'- to 5'-direction. The polypeptide is Polyribonucleotide nucleotidyltransferase (Helicobacter pylori (strain G27)).